A 187-amino-acid polypeptide reads, in one-letter code: MTKVHYSRAPENSTKSCKARGSDLRVHFKNTHEAAMALRGMPLRRAQAFLNHVKEHKEIVPFRRFHGGIGRAAQTKQWNTTQGRWPVKSADFLLDLLKNAESNAEYKGLDVDHLVIEHINVQRAAKLRRRTYRAHGRINPYMSSPCHIEVILAEKEDVVSKPTDDAAPKVKKESKRKQRRQLARGEF.

Basic and acidic residues predominate over residues 159–171 (VSKPTDDAAPKVK). Positions 159–187 (VSKPTDDAAPKVKKESKRKQRRQLARGEF) are disordered. Residues 172 to 187 (KESKRKQRRQLARGEF) are compositionally biased toward basic residues.

This sequence belongs to the universal ribosomal protein uL22 family.

This is Large ribosomal subunit protein uL22 (rpl-17) from Caenorhabditis elegans.